The primary structure comprises 301 residues: UDP-3-O-acyl-N-acetylglucosamine deacetylase (301 aa).

Histidine 81, histidine 237, and aspartate 241 together coordinate Zn(2+). Histidine 264 acts as the Proton donor in catalysis.

The protein belongs to the LpxC family. It depends on Zn(2+) as a cofactor.

It carries out the reaction a UDP-3-O-[(3R)-3-hydroxyacyl]-N-acetyl-alpha-D-glucosamine + H2O = a UDP-3-O-[(3R)-3-hydroxyacyl]-alpha-D-glucosamine + acetate. It participates in glycolipid biosynthesis; lipid IV(A) biosynthesis; lipid IV(A) from (3R)-3-hydroxytetradecanoyl-[acyl-carrier-protein] and UDP-N-acetyl-alpha-D-glucosamine: step 2/6. Its function is as follows. Catalyzes the hydrolysis of UDP-3-O-myristoyl-N-acetylglucosamine to form UDP-3-O-myristoylglucosamine and acetate, the committed step in lipid A biosynthesis. The chain is UDP-3-O-acyl-N-acetylglucosamine deacetylase from Leptospira borgpetersenii serovar Hardjo-bovis (strain JB197).